A 279-amino-acid chain; its full sequence is Pantothenate synthetase (279 aa).

26 to 33 lines the ATP pocket; sequence MGNLHDGH. The Proton donor role is filled by His33. (R)-pantoate is bound at residue Gln57. Beta-alanine is bound at residue Gln57. Position 144–147 (144–147) interacts with ATP; that stretch reads GKKD. (R)-pantoate is bound at residue Gln150. An ATP-binding site is contributed by 181–184; it reads LSSR.

This sequence belongs to the pantothenate synthetase family. As to quaternary structure, homodimer.

The protein localises to the cytoplasm. The enzyme catalyses (R)-pantoate + beta-alanine + ATP = (R)-pantothenate + AMP + diphosphate + H(+). Its pathway is cofactor biosynthesis; (R)-pantothenate biosynthesis; (R)-pantothenate from (R)-pantoate and beta-alanine: step 1/1. Catalyzes the condensation of pantoate with beta-alanine in an ATP-dependent reaction via a pantoyl-adenylate intermediate. This chain is Pantothenate synthetase, found in Herminiimonas arsenicoxydans.